A 670-amino-acid polypeptide reads, in one-letter code: Small ribosomal subunit protein mS39 (670 aa).

Residues 1–13 (MAAPCVRLGSVRC) constitute a mitochondrion transit peptide. 11 PPR repeats span residues 129-163 (VEGVSEEALKERIQLRRVKESVDLFDQLLQGGTAP), 164-199 (SLETTNKLLDLISFYGDREPVRDIQTSEQEQQEVQD), 209-239 (RPRQYRKASEILGSWRENNNAERIFNLMPER), 240-274 (NAHSFCTLIQGMAKFGSSSKAFNIYTDLMNNRLTA), 275-314 (DVQTFNALILAAPDIKEKYNEKWDLIVELLKHMVQQNVRP), 315-351 (NLLTFNSVLKSLRKCGPMAKGLALQTINEMKALNIEP), 352-392 (SLAT…FTLR), 396-430 (DVYFFTNAMRVCLDLKDIELAYRLHTLQQTADNRG), 438-472 (QSTYYGRFFNLLCMMESIDIILKWYRELIPSLYYP), 473-507 (NSRGMLDLLQALDMDNRLDLIPQIWKDIKQIGHSN), and 556-590 (SAGSLGNVSALLARAGKTVEAWKMLQLFKKSHRVP). A disordered region spans residues 187-213 (IQTSEQEQQEVQDQQETEDPKKRPRQY). Acidic residues predominate over residues 193–203 (EQQEVQDQQET). A disordered region spans residues 648–670 (EDLQKSHSSSSSSSSSSSDSDRE). A compositionally biased stretch (low complexity) spans 653-670 (SHSSSSSSSSSSSDSDRE).

The protein belongs to the mitochondrion-specific ribosomal protein mS39 family.

The protein resides in the mitochondrion. Functionally, mitochondrial protein that may have a role in mitochondrial translation. This chain is Small ribosomal subunit protein mS39 (ptcd3), found in Xenopus tropicalis (Western clawed frog).